The following is a 44-amino-acid chain: Conotoxin Rg11a (44 aa).

Intrachain disulfides connect C1-C15, C8-C22, C14-C30, and C21-C36.

As to expression, expressed by the venom duct.

The protein resides in the secreted. Functionally, neurotoxin. Elicits hypersensibility when injected intracranially in mice. May act via potassium channel currents. The chain is Conotoxin Rg11a from Conus regius (Crown cone).